A 596-amino-acid chain; its full sequence is Elongation factor 4 (596 aa).

Positions 2-184 constitute a tr-type G domain; sequence KHIRNFSIIA…TIVAQIPSPE (183 aa). Residues 14-19 and 131-134 each bind GTP; these read DHGKST and NKID.

This sequence belongs to the TRAFAC class translation factor GTPase superfamily. Classic translation factor GTPase family. LepA subfamily.

The protein localises to the cell inner membrane. The catalysed reaction is GTP + H2O = GDP + phosphate + H(+). Its function is as follows. Required for accurate and efficient protein synthesis under certain stress conditions. May act as a fidelity factor of the translation reaction, by catalyzing a one-codon backward translocation of tRNAs on improperly translocated ribosomes. Back-translocation proceeds from a post-translocation (POST) complex to a pre-translocation (PRE) complex, thus giving elongation factor G a second chance to translocate the tRNAs correctly. Binds to ribosomes in a GTP-dependent manner. In Shewanella amazonensis (strain ATCC BAA-1098 / SB2B), this protein is Elongation factor 4.